The sequence spans 602 residues: Elongation factor 4 (602 aa).

One can recognise a tr-type G domain in the interval 7-189 (KFIRNFSIIA…QLVVAIPPPV (183 aa)). GTP is bound by residues 19–24 (DHGKST) and 136–139 (NKID).

This sequence belongs to the TRAFAC class translation factor GTPase superfamily. Classic translation factor GTPase family. LepA subfamily.

It is found in the cell inner membrane. It catalyses the reaction GTP + H2O = GDP + phosphate + H(+). Functionally, required for accurate and efficient protein synthesis under certain stress conditions. May act as a fidelity factor of the translation reaction, by catalyzing a one-codon backward translocation of tRNAs on improperly translocated ribosomes. Back-translocation proceeds from a post-translocation (POST) complex to a pre-translocation (PRE) complex, thus giving elongation factor G a second chance to translocate the tRNAs correctly. Binds to ribosomes in a GTP-dependent manner. In Coxiella burnetii (strain Dugway 5J108-111), this protein is Elongation factor 4.